Here is a 748-residue protein sequence, read N- to C-terminus: Wings apart-like protein homolog 1 (748 aa).

Disordered regions lie at residues 23–199 (TLAQ…VYAT) and 614–644 (EGGCGDEEEEEEGGDESSDEDGVRKDGRLDR). The span at 35–64 (PSVRSSDSPDVPDTPDVPVNQLSSPPLSLP) shows a compositional bias: low complexity. Polar residues-rich tracts occupy residues 68–79 (SEGNAETLQNLS) and 87–96 (LSQSSTSSLN). The segment covering 172-182 (ISSSSNRYSSR) has biased composition (low complexity). The WAPL domain occupies 205-723 (KPLASGYGSR…KRLYDFTKAT (519 aa)). A compositionally biased stretch (acidic residues) spans 616–633 (GCGDEEEEEEGGDESSDE). A compositionally biased stretch (basic and acidic residues) spans 634–644 (DGVRKDGRLDR).

This sequence belongs to the WAPL family.

Its subcellular location is the nucleus. Functionally, regulator of meiotic chromosome structure and function, playing a role in sister chromatid cohesion, possibly via antagonizing the coh-3/-4 association with axial elements in nuclei during late prophase, cohesin association with chromatin, DNA double strand break repair and polar body positioning following meiotic divisions during oogenesis. Regulates the morphogenesis and temporal assembly of axial elements to control the organization of meiotic chromosomes in pachytene nuclei and is also involved in meiotic chromosomal remodeling in late pachytene nuclei. Required for the removal of the cohesin component scc-1 from mitotic chromosomes. This chain is Wings apart-like protein homolog 1, found in Caenorhabditis elegans.